Consider the following 510-residue polypeptide: Secreted RxLR effector protein 24 (510 aa).

The N-terminal stretch at 1 to 18 (MRGAFYVAIALLGSHTAA) is a signal peptide. The short motif at 47 to 68 (RVLRERRDSKDKLTVHAGAEER) is the RxLR-dEER element.

Belongs to the RxLR effector family.

Its subcellular location is the secreted. It is found in the host nucleus. In terms of biological role, secreted effector that acts as an elicitor that induces cell death in host plant cells. The polypeptide is Secreted RxLR effector protein 24 (Plasmopara viticola (Downy mildew of grapevine)).